The chain runs to 377 residues: Succinyl-diaminopimelate desuccinylase (377 aa).

His-66 lines the Zn(2+) pocket. Residue Asp-68 is part of the active site. Asp-99 provides a ligand contact to Zn(2+). Glu-133 functions as the Proton acceptor in the catalytic mechanism. Positions 134, 162, and 348 each coordinate Zn(2+).

Belongs to the peptidase M20A family. DapE subfamily. In terms of assembly, homodimer. It depends on Zn(2+) as a cofactor. Co(2+) is required as a cofactor.

It carries out the reaction N-succinyl-(2S,6S)-2,6-diaminopimelate + H2O = (2S,6S)-2,6-diaminopimelate + succinate. Its pathway is amino-acid biosynthesis; L-lysine biosynthesis via DAP pathway; LL-2,6-diaminopimelate from (S)-tetrahydrodipicolinate (succinylase route): step 3/3. Its function is as follows. Catalyzes the hydrolysis of N-succinyl-L,L-diaminopimelic acid (SDAP), forming succinate and LL-2,6-diaminopimelate (DAP), an intermediate involved in the bacterial biosynthesis of lysine and meso-diaminopimelic acid, an essential component of bacterial cell walls. The chain is Succinyl-diaminopimelate desuccinylase from Xylella fastidiosa (strain 9a5c).